The following is a 388-amino-acid chain: tRNA(Ile)-lysidine synthase (388 aa).

Residue 51-56 coordinates ATP; it reads SGGRDS.

Belongs to the tRNA(Ile)-lysidine synthase family.

Its subcellular location is the cytoplasm. It carries out the reaction cytidine(34) in tRNA(Ile2) + L-lysine + ATP = lysidine(34) in tRNA(Ile2) + AMP + diphosphate + H(+). Its function is as follows. Ligates lysine onto the cytidine present at position 34 of the AUA codon-specific tRNA(Ile) that contains the anticodon CAU, in an ATP-dependent manner. Cytidine is converted to lysidine, thus changing the amino acid specificity of the tRNA from methionine to isoleucine. The sequence is that of tRNA(Ile)-lysidine synthase from Bifidobacterium longum (strain DJO10A).